The chain runs to 590 residues: Aspartate--tRNA(Asp/Asn) ligase (590 aa).

Residue E170 coordinates L-aspartate. Residues 194 to 197 (QLFK) are aspartate. R216 provides a ligand contact to L-aspartate. Residues 216-218 (RDE) and Q225 contribute to the ATP site. L-aspartate is bound at residue H448. An ATP-binding site is contributed by E482. R489 serves as a coordination point for L-aspartate. 534-537 (GWDR) serves as a coordination point for ATP. The disordered stretch occupies residues 557-590 (SGGGADPLTGAPAPITPQQRRESGIDAKPKKDGE). The span at 575–590 (QRRESGIDAKPKKDGE) shows a compositional bias: basic and acidic residues.

It belongs to the class-II aminoacyl-tRNA synthetase family. Type 1 subfamily. Homodimer.

It is found in the cytoplasm. It catalyses the reaction tRNA(Asx) + L-aspartate + ATP = L-aspartyl-tRNA(Asx) + AMP + diphosphate. Functionally, aspartyl-tRNA synthetase with relaxed tRNA specificity since it is able to aspartylate not only its cognate tRNA(Asp) but also tRNA(Asn). Reaction proceeds in two steps: L-aspartate is first activated by ATP to form Asp-AMP and then transferred to the acceptor end of tRNA(Asp/Asn). The sequence is that of Aspartate--tRNA(Asp/Asn) ligase from Mycobacterium sp. (strain KMS).